A 326-amino-acid polypeptide reads, in one-letter code: Aldo-keto reductase family 1 member D1 (326 aa).

Residues 22-26 (GLGTY) and Asp-52 contribute to the NADP(+) site. Tyr-26 is a binding site for substrate. Tyr-57, Trp-88, Glu-119, and Tyr-131 together coordinate substrate. Tyr-57 (proton donor) is an active-site residue. Residues 168–169 (SN), Gln-192, and 219–224 (YSPLGT) each bind NADP(+). Position 230 (Trp-230) interacts with substrate. Residue 273–283 (KSTTPERIKEN) participates in NADP(+) binding.

The protein belongs to the aldo/keto reductase family. The N-terminus is blocked.

It localises to the cytoplasm. The catalysed reaction is 5beta-cholestan-3-one + NADP(+) = cholest-4-en-3-one + NADPH + H(+). The enzyme catalyses 4,5beta-dihydrocortisone + NADP(+) = cortisone + NADPH + H(+). It carries out the reaction cortisol + NADPH + H(+) = 5beta-dihydrocortisol + NADP(+). It catalyses the reaction corticosterone + NADPH + H(+) = 5beta-dihydrocorticosterone + NADP(+). The catalysed reaction is 7alpha,12alpha-dihydroxycholest-4-en-3-one + NADPH + H(+) = 7alpha,12alpha-dihydroxy-5beta-cholestan-3-one + NADP(+). The enzyme catalyses 7alpha-hydroxycholest-4-en-3-one + NADPH + H(+) = 7alpha-hydroxy-5beta-cholestan-3-one + NADP(+). It carries out the reaction epitestosterone + NADPH + H(+) = 5beta-dihydroepitestosterone + NADP(+). It catalyses the reaction androst-4-ene-3,17-dione + NADPH + H(+) = 5beta-androstane-3,17-dione + NADP(+). The catalysed reaction is progesterone + NADPH + H(+) = 5beta-pregnan-3,20-dione + NADP(+). The enzyme catalyses 21-hydroxyprogesterone + NADPH + H(+) = 5beta-dihydrodeoxycorticosterone + NADP(+). It carries out the reaction aldosterone + NADPH + H(+) = 5beta-dihydroaldosterone + NADP(+). It catalyses the reaction 17beta-hydroxyandrosta-1,4-dien-3-one + NADPH + H(+) = 17beta-hydroxy-5beta-androst-1-en-3-one + NADP(+). The catalysed reaction is 17beta-hydroxyestr-4-en-3-one + NADPH + H(+) = 17beta-hydroxy-5beta-estran-3-one + NADP(+). The enzyme catalyses 5beta-dihydrotestosterone + NADP(+) = testosterone + NADPH + H(+). It carries out the reaction androst-4-ene-3,11,17-trione + NADPH + H(+) = 17beta-hydroxyandrost-4-ene-3,11-dione + NADP(+). Subject to inhibition by high substrate concentrations. Inhibited by testosterone concentrations above 10 uM. Inhibited by the primary and secondary bile acids chenodeoxycholic acid and ursodeoxycholic acid. Catalyzes the stereospecific NADPH-dependent reduction of the C4-C5 double bond of bile acid intermediates and steroid hormones carrying a delta(4)-3-one structure to yield an A/B cis-ring junction. This cis-configuration is crucial for bile acid biosynthesis and plays important roles in steroid metabolism. Capable of reducing a broad range of delta-(4)-3-ketosteroids from C18 (such as, 17beta-hydroxyestr-4-en-3-one) to C27 (such as, 7alpha-hydroxycholest-4-en-3-one). The polypeptide is Aldo-keto reductase family 1 member D1 (Akr1d1) (Rattus norvegicus (Rat)).